Reading from the N-terminus, the 264-residue chain is JmjC domain-containing protein 8 (264 aa).

A signal peptide spans 1-23 (MAPASRLLALWALAAVALPGSGA). 3 N-linked (GlcNAc...) asparagine glycosylation sites follow: Asn-130, Asn-140, and Asn-209. Positions 131 to 264 (DTLYFFGDNN…TSVFISTFLG (134 aa)) constitute a JmjC domain.

In terms of assembly, oligomer. Dimer. Interacts with PKM; regulates angiogenesis and metabolism. In terms of processing, N-glycosylated.

It is found in the endoplasmic reticulum lumen. The protein localises to the cytoplasm. Functionally, functions as a positive regulator of TNF-induced NF-kappa-B signaling. Regulates angiogenesis and cellular metabolism through interaction with PKM. This is JmjC domain-containing protein 8 from Homo sapiens (Human).